A 169-amino-acid chain; its full sequence is Peptide methionine sulfoxide reductase MsrA (169 aa).

The active site involves C10.

The protein belongs to the MsrA Met sulfoxide reductase family.

The catalysed reaction is L-methionyl-[protein] + [thioredoxin]-disulfide + H2O = L-methionyl-(S)-S-oxide-[protein] + [thioredoxin]-dithiol. It catalyses the reaction [thioredoxin]-disulfide + L-methionine + H2O = L-methionine (S)-S-oxide + [thioredoxin]-dithiol. Has an important function as a repair enzyme for proteins that have been inactivated by oxidation. Catalyzes the reversible oxidation-reduction of methionine sulfoxide in proteins to methionine. The chain is Peptide methionine sulfoxide reductase MsrA from Streptococcus equi subsp. equi (strain 4047).